We begin with the raw amino-acid sequence, 133 residues long: Cell division protein FtsL (133 aa).

Over 1–45 (MAVEKVYQPYDEQVYNSIPKQQPQTKPEKKTVSRKVVVQLTKFEK) the chain is Cytoplasmic. The chain crosses the membrane as a helical span at residues 46 to 65 (VLYITLITVIAMLSIYMLSL). The Extracellular segment spans residues 66–133 (KMDAYDTRGK…VVRSNGEAKN (68 aa)).

The protein belongs to the FtsL family.

The protein localises to the cell membrane. Its function is as follows. Essential cell division protein. This chain is Cell division protein FtsL, found in Staphylococcus aureus (strain NCTC 8325 / PS 47).